A 186-amino-acid chain; its full sequence is Peptide deformylase (186 aa).

Residues cysteine 99 and histidine 141 each contribute to the Fe cation site. The active site involves glutamate 142. Histidine 145 serves as a coordination point for Fe cation.

The protein belongs to the polypeptide deformylase family. The cofactor is Fe(2+).

It catalyses the reaction N-terminal N-formyl-L-methionyl-[peptide] + H2O = N-terminal L-methionyl-[peptide] + formate. Its function is as follows. Removes the formyl group from the N-terminal Met of newly synthesized proteins. Requires at least a dipeptide for an efficient rate of reaction. N-terminal L-methionine is a prerequisite for activity but the enzyme has broad specificity at other positions. This Chlamydia caviae (strain ATCC VR-813 / DSM 19441 / 03DC25 / GPIC) (Chlamydophila caviae) protein is Peptide deformylase.